The following is a 379-amino-acid chain: Mating-type protein MAT-1 (379 aa).

The alpha box DNA-binding region spans 60 to 117; sequence KARKALNAFVGFRCYYITIPMFKPWPMKKLSNLIGLLWEADPNKSLWSLMAKAWSTIR.

This sequence belongs to the MATALPHA1 family.

The protein localises to the nucleus. Mating type proteins are sequence specific DNA-binding proteins that act as master switches in fungal differentiation by controlling gene expression in a cell type-specific fashion. Transcriptional activator that induces the transcription of alpha-specific genes. The chain is Mating-type protein MAT-1 (MAT1) from Cochliobolus carbonum (strain 26-R-13) (Maize leaf spot fungus).